The primary structure comprises 141 residues: Large ribosomal subunit protein uL14 (141 aa).

The protein belongs to the universal ribosomal protein uL14 family. As to quaternary structure, part of the 50S ribosomal subunit. Forms a cluster with proteins L3 and L24e, part of which may contact the 16S rRNA in 2 intersubunit bridges.

In terms of biological role, binds to 23S rRNA. Forms part of two intersubunit bridges in the 70S ribosome. This chain is Large ribosomal subunit protein uL14, found in Pyrococcus horikoshii (strain ATCC 700860 / DSM 12428 / JCM 9974 / NBRC 100139 / OT-3).